The following is a 53-amino-acid chain: ATP synthase protein 8 (53 aa).

The helical transmembrane segment at 9 to 29 (WLILFFIFSITLVIFNILNYF) threads the bilayer.

The protein belongs to the ATPase protein 8 family. In terms of assembly, F-type ATPases have 2 components, CF(1) - the catalytic core - and CF(0) - the membrane proton channel.

Its subcellular location is the mitochondrion membrane. Functionally, mitochondrial membrane ATP synthase (F(1)F(0) ATP synthase or Complex V) produces ATP from ADP in the presence of a proton gradient across the membrane which is generated by electron transport complexes of the respiratory chain. F-type ATPases consist of two structural domains, F(1) - containing the extramembraneous catalytic core and F(0) - containing the membrane proton channel, linked together by a central stalk and a peripheral stalk. During catalysis, ATP synthesis in the catalytic domain of F(1) is coupled via a rotary mechanism of the central stalk subunits to proton translocation. Part of the complex F(0) domain. Minor subunit located with subunit a in the membrane. The chain is ATP synthase protein 8 (mt:ATPase8) from Anopheles quadrimaculatus (Common malaria mosquito).